Consider the following 293-residue polypeptide: Exosome complex component RRP4 (293 aa).

Positions 1–20 (MALEMRLPKARKPLSESLGR) are disordered. Positions 79–159 (EVGDIVVGRI…SDGAVSLHTR (81 aa)) constitute an S1 motif domain. Serine 124 carries the post-translational modification Phosphoserine.

Belongs to the RRP4 family. In terms of assembly, component of the RNA exosome core complex (Exo-9), composed of EXOSC1, EXOSC2, EXOSC3, EXOSC4, EXOSC5, EXOSC6, EXOSC7, EXOSC8 and EXOSC9; within the complex interacts with EXOSC4 and EXOSC7. The catalytically inactive RNA exosome core complex (Exo-9) associates with the catalytic subunit EXOSC10/RRP6. Exo-9 may associate with DIS3 to form the nucleolar exosome complex, or DIS3L to form the cytoplasmic exosome complex. Exo-9 is formed by a hexameric base ring consisting of the heterodimers EXOSC4-EXOSC9, EXOSC5-EXOSC8 and EXOSC6-EXOSC7, and a cap ring consisting of EXOSC1, EXOSC2 and EXOSC3. The RNA exosome complex associates with cofactors C1D/RRP47, MPHOSPH6/MPP6 and MTREX/MTR4. Interacts with GTPBP1. Interacts with ZFP36L1 (via N-terminus).

The protein resides in the cytoplasm. The protein localises to the nucleus. It localises to the nucleolus. In terms of biological role, non-catalytic component of the RNA exosome complex which has 3'-&gt;5' exoribonuclease activity and participates in a multitude of cellular RNA processing and degradation events. In the nucleus, the RNA exosome complex is involved in proper maturation of stable RNA species such as rRNA, snRNA and snoRNA, in the elimination of RNA processing by-products and non-coding 'pervasive' transcripts, such as antisense RNA species and promoter-upstream transcripts (PROMPTs), and of mRNAs with processing defects, thereby limiting or excluding their export to the cytoplasm. The RNA exosome may be involved in Ig class switch recombination (CSR) and/or Ig variable region somatic hypermutation (SHM) by targeting AICDA deamination activity to transcribed dsDNA substrates. In the cytoplasm, the RNA exosome complex is involved in general mRNA turnover and specifically degrades inherently unstable mRNAs containing AU-rich elements (AREs) within their 3' untranslated regions, and in RNA surveillance pathways, preventing translation of aberrant mRNAs. It seems to be involved in degradation of histone mRNA. The catalytic inactive RNA exosome core complex of 9 subunits (Exo-9) is proposed to play a pivotal role in the binding and presentation of RNA for ribonucleolysis, and to serve as a scaffold for the association with catalytic subunits and accessory proteins or complexes. EXOSC2 as peripheral part of the Exo-9 complex stabilizes the hexameric ring of RNase PH-domain subunits through contacts with EXOSC4 and EXOSC7. This Mus musculus (Mouse) protein is Exosome complex component RRP4 (Exosc2).